The following is a 255-amino-acid chain: 5'-nucleotidase SurE (255 aa).

A divalent metal cation contacts are provided by D8, D9, S40, and N93.

It belongs to the SurE nucleotidase family. A divalent metal cation is required as a cofactor.

The protein resides in the cytoplasm. The catalysed reaction is a ribonucleoside 5'-phosphate + H2O = a ribonucleoside + phosphate. Functionally, nucleotidase that shows phosphatase activity on nucleoside 5'-monophosphates. This chain is 5'-nucleotidase SurE, found in Rhodopseudomonas palustris (strain BisA53).